The chain runs to 80 residues: MHAKVGDYLVVKGTTTERHDQHAEIIEVRSADGSPPYVVRWLVNGHETTVYPGSDAVVVTATEHAEAEKRAAARAGHAAT.

To M.leprae U650M.

This is an uncharacterized protein from Mycobacterium bovis (strain ATCC BAA-935 / AF2122/97).